A 194-amino-acid polypeptide reads, in one-letter code: Kallikrein-like enzyme LV-Ka (194 aa).

5 cysteine pairs are disulfide-bonded: cysteine 7–cysteine 99, cysteine 44–cysteine 192, cysteine 78–cysteine 146, cysteine 110–cysteine 125, and cysteine 136–cysteine 161. The 150-residue stretch at 36-185 (LNQEDKFICP…YTEWIQSIIA (150 aa)) folds into the Peptidase S1 domain. The Charge relay system role is filled by serine 140.

Belongs to the peptidase S1 family. Snake venom subfamily. As to quaternary structure, monomer. N-glycosylated. In terms of tissue distribution, expressed by the venom gland.

The protein localises to the secreted. Its activity is regulated as follows. Completely inhibited by the serine protease inhibitors NPGB and PMSF, partially inhibited by benzamidines, and weakly or not inhibited by SBTI and EDTA. Its function is as follows. Shows kallikrein-like activity, releasing bradykinin from kininogen. Also activates plasminogen, which is also a plasma kallikrein activity. Is active upon the kallikrein substrates S-2266 and S-2302, suggesting a preference for Arg in P1 position. In vivo, lowers blood pressure after intravenous injection in rat. This Lachesis muta muta (Bushmaster) protein is Kallikrein-like enzyme LV-Ka.